A 277-amino-acid polypeptide reads, in one-letter code: Diaminopimelate epimerase (277 aa).

Residues asparagine 13, glutamine 46, and asparagine 66 each contribute to the substrate site. Cysteine 75 functions as the Proton donor in the catalytic mechanism. Substrate contacts are provided by residues 76-77, asparagine 160, asparagine 193, and 211-212; these read GN and ER. The active-site Proton acceptor is the cysteine 220. A substrate-binding site is contributed by 221 to 222; sequence GS.

It belongs to the diaminopimelate epimerase family. In terms of assembly, homodimer.

The protein localises to the cytoplasm. The enzyme catalyses (2S,6S)-2,6-diaminopimelate = meso-2,6-diaminopimelate. It functions in the pathway amino-acid biosynthesis; L-lysine biosynthesis via DAP pathway; DL-2,6-diaminopimelate from LL-2,6-diaminopimelate: step 1/1. Functionally, catalyzes the stereoinversion of LL-2,6-diaminopimelate (L,L-DAP) to meso-diaminopimelate (meso-DAP), a precursor of L-lysine and an essential component of the bacterial peptidoglycan. The polypeptide is Diaminopimelate epimerase (Legionella pneumophila (strain Corby)).